The following is a 26-amino-acid chain: NFKQIIKMIQCTNTRPWXNFLDYGCY.

In terms of processing, contains 7 disulfide bonds. Expressed by the venom gland.

Its subcellular location is the secreted. This is Phospholipase A2 homolog A1 from Micrurus pyrrhocryptus (Coral snake).